Reading from the N-terminus, the 121-residue chain is Cysteine-rich neurotrophic factor (121 aa).

An N-terminal signal peptide occupies residues 1-18 (MLLKLIVALSLTLTLASA). An N-linked (GlcNAc...) asparagine glycan is attached at N57.

It localises to the secreted. In terms of biological role, interacts with the p75 low-affinity neurotrophin receptor. Evokes neurite outgrowth and modulated calcium currents in pedal motor neurons. May be involved in target-derived trophic support for motor neurons. In Lymnaea stagnalis (Great pond snail), this protein is Cysteine-rich neurotrophic factor.